Here is a 95-residue protein sequence, read N- to C-terminus: Alpha-conotoxin-like Ms20.4 (95 aa).

Residues 1-24 form the signal peptide; the sequence is MPKLAVVLLVLLILPLSYFDVAGG. Positions 25–45 are excised as a propeptide; sequence QAAEGDRRGNGLARYPQRGGR. E50 carries the 4-carboxyglutamate modification. P56 is modified (4-hydroxyproline). Cystine bridges form between C64–C73, C69–C81, C74–C91, and C79–C93.

This sequence belongs to the conotoxin D superfamily. As to quaternary structure, hetero-, homo- or pseudo-homodimer (identical sequence, different post-translational modifications). Heterodimer of [carboxy'Glu-48', hydroxy'Pro-54']Ms20.1 and [carboxyGlu-50, hydroxyPro-56]Ms20.4 may exist. Expressed by the venom duct.

It localises to the secreted. In terms of biological role, alpha-conotoxins act on postsynaptic membranes, they bind to the nicotinic acetylcholine receptors (nAChR) and thus inhibit them. Through its two C-terminal domains, this homodimeric protein would bind to two nAChR allosteric sites, located outside the nAChR C-loop of the principal binding face and at the adjacent binding interface in a clockwise direction. This toxin specifically blocks mammalian neuronal nAChR of the alpha-7/CHRNA7, alpha-3-beta-2/CHRNA3-CHRNB2 and alpha-4-beta-2/CHRNA4-CHRNB2 subtypes. This chain is Alpha-conotoxin-like Ms20.4, found in Conus mustelinus (Weasel cone).